The chain runs to 77 residues: Conotoxin Cl6.12 (77 aa).

The signal sequence occupies residues 1 to 20; that stretch reads MKFYLLLTAALLLTAVIIEA. Residues 21-36 constitute a propeptide that is removed on maturation; the sequence is APTDHQDEARDLMREE. 3 disulfides stabilise this stretch: Cys-43-Cys-58, Cys-51-Cys-62, and Cys-57-Cys-68.

In terms of tissue distribution, expressed by the venom duct.

The protein localises to the secreted. The polypeptide is Conotoxin Cl6.12 (Californiconus californicus (California cone)).